The sequence spans 305 residues: tRNA dimethylallyltransferase (305 aa).

ATP is bound at residue 8–15; the sequence is GPTGTGKS. 10 to 15 is a substrate binding site; sequence TGTGKS.

Belongs to the IPP transferase family. In terms of assembly, monomer. The cofactor is Mg(2+).

It catalyses the reaction adenosine(37) in tRNA + dimethylallyl diphosphate = N(6)-dimethylallyladenosine(37) in tRNA + diphosphate. Its function is as follows. Catalyzes the transfer of a dimethylallyl group onto the adenine at position 37 in tRNAs that read codons beginning with uridine, leading to the formation of N6-(dimethylallyl)adenosine (i(6)A). In Mycobacterium sp. (strain JLS), this protein is tRNA dimethylallyltransferase.